The following is a 474-amino-acid chain: Protein U79/U80 (474 aa).

Composition is skewed to basic and acidic residues over residues Asp156–Arg165 and Arg175–Lys219. 2 disordered regions span residues Asp156–Lys219 and Ser412–Gln441. The span at Gly417–Asn432 shows a compositional bias: basic residues.

The protein belongs to the herpesviridae U79/UL112 family.

The protein localises to the host nucleus. Its function is as follows. May be involved in DNA replication. This Homo sapiens (Human) protein is Protein U79/U80 (U79/U80).